Here is a 54-residue protein sequence, read N- to C-terminus: Large ribosomal subunit protein bL33A (54 aa).

Belongs to the bacterial ribosomal protein bL33 family.

This is Large ribosomal subunit protein bL33A from Mycobacterium marinum (strain ATCC BAA-535 / M).